Reading from the N-terminus, the 274-residue chain is tRNA-cytidine(32) 2-sulfurtransferase (274 aa).

The PP-loop motif motif lies at 40 to 45; it reads SGGKDS. Residues cysteine 115, cysteine 118, and cysteine 206 each contribute to the [4Fe-4S] cluster site.

It belongs to the TtcA family. In terms of assembly, homodimer. Mg(2+) serves as cofactor. It depends on [4Fe-4S] cluster as a cofactor.

The protein localises to the cytoplasm. It carries out the reaction cytidine(32) in tRNA + S-sulfanyl-L-cysteinyl-[cysteine desulfurase] + AH2 + ATP = 2-thiocytidine(32) in tRNA + L-cysteinyl-[cysteine desulfurase] + A + AMP + diphosphate + H(+). Its pathway is tRNA modification. In terms of biological role, catalyzes the ATP-dependent 2-thiolation of cytidine in position 32 of tRNA, to form 2-thiocytidine (s(2)C32). The sulfur atoms are provided by the cysteine/cysteine desulfurase (IscS) system. The chain is tRNA-cytidine(32) 2-sulfurtransferase from Ectopseudomonas mendocina (strain ymp) (Pseudomonas mendocina).